The primary structure comprises 268 residues: Ribosomal RNA small subunit methyltransferase A (268 aa).

The S-adenosyl-L-methionine site is built by Asn-23, Ile-25, Gly-50, Glu-72, Asp-97, and Asn-116.

Belongs to the class I-like SAM-binding methyltransferase superfamily. rRNA adenine N(6)-methyltransferase family. RsmA subfamily.

It localises to the cytoplasm. The enzyme catalyses adenosine(1518)/adenosine(1519) in 16S rRNA + 4 S-adenosyl-L-methionine = N(6)-dimethyladenosine(1518)/N(6)-dimethyladenosine(1519) in 16S rRNA + 4 S-adenosyl-L-homocysteine + 4 H(+). Functionally, specifically dimethylates two adjacent adenosines (A1518 and A1519) in the loop of a conserved hairpin near the 3'-end of 16S rRNA in the 30S particle. May play a critical role in biogenesis of 30S subunits. The polypeptide is Ribosomal RNA small subunit methyltransferase A (Rickettsia bellii (strain RML369-C)).